The following is a 205-amino-acid chain: SREBP regulating gene protein (205 aa).

The Cytoplasmic portion of the chain corresponds to 1-16 (MVPCGAVLWRRLLRKR). A helical membrane pass occupies residues 17–35 (WVLGVVFGLSLVYFLSSTF). Residues 36 to 205 (KQEERTVRDR…GEYPPELLPV (170 aa)) are Lumenal-facing. Residue asparagine 67 is glycosylated (N-linked (GlcNAc...) asparagine).

It belongs to the SPRING family.

Its subcellular location is the golgi apparatus membrane. Positively regulates hepatic SREBP signaling pathway by modulating the proper localization of SCAP (SREBP cleavage-activating protein) to the endoplasmic reticulum, thereby controlling the level of functional SCAP. The polypeptide is SREBP regulating gene protein (Gallus gallus (Chicken)).